We begin with the raw amino-acid sequence, 112 residues long: SPbeta prophage-derived uncharacterized protein YoqB (112 aa).

The chain is SPbeta prophage-derived uncharacterized protein YoqB (yoqB) from Bacillus subtilis (strain 168).